A 377-amino-acid polypeptide reads, in one-letter code: RIB43A-like with coiled-coils protein 2 (377 aa).

Positions 188–238 form a coiled coil; sequence ELKFDEAARDLQRLEITTRKAVCAAVKEFNKKQVVELAERKRQVKQQEQED. Residues 355–377 are disordered; that stretch reads QLDAAPSSQPTEDYFSQFNTRSR. A compositionally biased stretch (polar residues) spans 360–377; that stretch reads PSSQPTEDYFSQFNTRSR.

It belongs to the RIB43A family. As to quaternary structure, microtubule inner protein component of sperm flagellar doublet microtubules.

The protein resides in the cytoplasm. Its subcellular location is the cytoskeleton. The protein localises to the cilium axoneme. It localises to the flagellum axoneme. In terms of biological role, microtubule inner protein (MIP) part of the dynein-decorated doublet microtubules (DMTs) in cilia axoneme, which is required for motile cilia beating. The sequence is that of RIB43A-like with coiled-coils protein 2 from Rattus norvegicus (Rat).